The primary structure comprises 144 residues: MTVVPAQQTGGGGSSGLYDVLELVLDRGLVIDAFVRVSLVGIEILKIDVRVVVASVDTYLRFAEACNRLDLEAGPRKDPGLPDLVGEMTESGARGKSKGALSGAAETISDAFKQARDDGGSERETSSRPRARKAAPSRRKEEQE.

The disordered stretch occupies residues 72 to 144 (EAGPRKDPGL…APSRRKEEQE (73 aa)). A compositionally biased stretch (basic and acidic residues) spans 113–127 (KQARDDGGSERETSS).

Belongs to the gas vesicle GvpA family. In terms of assembly, the gas vesicle shell is 2 nm thick and consists of a single layer of this protein. It forms helical ribs nearly perpendicular to the long axis of the vesicle.

It localises to the gas vesicle shell. In terms of biological role, gas vesicles are hollow, gas filled proteinaceous nanostructures found in some microorganisms. During planktonic growth they allow positioning of the organism at a favorable depth for light or nutrient acquisition. GvpA forms the protein shell. It is not clear what function GVs perform in soil bacteria. The polypeptide is Gas vesicle protein A1 (Streptomyces coelicolor (strain ATCC BAA-471 / A3(2) / M145)).